The following is a 426-amino-acid chain: Putative F-box protein At4g38870 (426 aa).

An F-box domain is found at S47–L92.

This Arabidopsis thaliana (Mouse-ear cress) protein is Putative F-box protein At4g38870.